The primary structure comprises 605 residues: uncharacterized protein (605 aa).

Residues 56–78 (ILWSSIAAACVILFAAYKTGAYF) traverse the membrane as a helical segment.

It is found in the cell membrane. This is an uncharacterized protein from Bacillus subtilis (strain 168).